The following is a 173-amino-acid chain: Ribulose bisphosphate carboxylase small subunit, chloroplastic 1 (173 aa).

Residues 1–49 (MASIPATVATVAQANMVAPFTGLKANAAFPVTKKVNDFSTLPSNGGRVQ) constitute a chloroplast transit peptide.

It belongs to the RuBisCO small chain family. Heterohexadecamer of 8 large and 8 small subunits.

The protein localises to the plastid. It localises to the chloroplast. In terms of biological role, ruBisCO catalyzes two reactions: the carboxylation of D-ribulose 1,5-bisphosphate, the primary event in carbon dioxide fixation, as well as the oxidative fragmentation of the pentose substrate. Both reactions occur simultaneously and in competition at the same active site. Although the small subunit is not catalytic it is essential for maximal activity. The chain is Ribulose bisphosphate carboxylase small subunit, chloroplastic 1 from Flaveria pringlei.